A 750-amino-acid chain; its full sequence is Photosystem I P700 chlorophyll a apoprotein A1 (750 aa).

Transmembrane regions (helical) follow at residues 70–93 (VFSAHFGQLAIIFIWLSGMYFHGA), 156–179 (LYCTAIGALIFAALMLFAGWFHYH), 195–219 (LNHHLAGLLGLGSLSWAGHQIHVSL), 291–309 (TAHHHLAIAVLFLIAGHMY), 346–369 (WHAQLAINLAMLGSLTIIVAHHMY), 385–411 (LSLFTHHMWIGGFIIVGAAAHAAIFMV), 433–455 (AIVSHLNWVCIFLGFHSFGLYIH), and 531–549 (FLVHHIHAFTIHVTVLILL). [4Fe-4S] cluster is bound by residues cysteine 573 and cysteine 582. 2 consecutive transmembrane segments (helical) span residues 589–610 (HVFLGLFWMYNAISVVIFHFSW) and 664–686 (LSAYGLLFLGAHFVWAFSLMFLF). Histidine 675 serves as a coordination point for chlorophyll a'. Chlorophyll a contacts are provided by methionine 683 and tyrosine 691. Tryptophan 692 lines the phylloquinone pocket. A helical transmembrane segment spans residues 724 to 744 (AVGVAHYLLGGIVTTWAFFLA).

It belongs to the PsaA/PsaB family. In terms of assembly, the PsaA/B heterodimer binds the P700 chlorophyll special pair and subsequent electron acceptors. PSI consists of a core antenna complex that captures photons, and an electron transfer chain that converts photonic excitation into a charge separation. The eukaryotic PSI reaction center is composed of at least 11 subunits. P700 is a chlorophyll a/chlorophyll a' dimer, A0 is one or more chlorophyll a, A1 is one or both phylloquinones and FX is a shared 4Fe-4S iron-sulfur center. serves as cofactor.

The protein localises to the plastid. It is found in the chloroplast thylakoid membrane. The catalysed reaction is reduced [plastocyanin] + hnu + oxidized [2Fe-2S]-[ferredoxin] = oxidized [plastocyanin] + reduced [2Fe-2S]-[ferredoxin]. In terms of biological role, psaA and PsaB bind P700, the primary electron donor of photosystem I (PSI), as well as the electron acceptors A0, A1 and FX. PSI is a plastocyanin-ferredoxin oxidoreductase, converting photonic excitation into a charge separation, which transfers an electron from the donor P700 chlorophyll pair to the spectroscopically characterized acceptors A0, A1, FX, FA and FB in turn. Oxidized P700 is reduced on the lumenal side of the thylakoid membrane by plastocyanin. This chain is Photosystem I P700 chlorophyll a apoprotein A1, found in Pinus koraiensis (Korean pine).